The following is an 89-amino-acid chain: Large ribosomal subunit protein uL23c (89 aa).

Belongs to the universal ribosomal protein uL23 family. As to quaternary structure, part of the 50S ribosomal subunit.

It localises to the plastid. The protein resides in the chloroplast. Binds to 23S rRNA. In Zygnema circumcarinatum (Green alga), this protein is Large ribosomal subunit protein uL23c (rpl23).